A 421-amino-acid chain; its full sequence is Testin (421 aa).

One can recognise a PET domain in the interval 92 to 199; the sequence is MILTNPVAAK…GDVKLPCEMD (108 aa). The tract at residues 133 to 164 is disordered; it reads EKQPVAGSEGAQYRKKQLAKQLPAHDQDPSKC. Residues 155–164 are compositionally biased toward basic and acidic residues; it reads PAHDQDPSKC. LIM zinc-binding domains follow at residues 234-297, 299-359, and 362-421; these read YSCY…CDSE, PRCA…NHAV, and QGCH…KMMS.

It belongs to the prickle / espinas / testin family. In terms of assembly, interacts via LIM domain 1 with ZYX. Interacts (via LIM domain 3) with ENAH and VASP. Interacts with ALKBH4, talin, actin, alpha-actinin, GRIP1 and PXN. Interacts (via LIM domain 2) with ACTL7A (via N-terminus). Heterodimer with ACTL7A; the heterodimer interacts with ENAH to form a heterotrimer.

Its subcellular location is the cytoplasm. The protein resides in the cell junction. The protein localises to the focal adhesion. Its function is as follows. Scaffold protein that may play a role in cell adhesion, cell spreading and in the reorganization of the actin cytoskeleton. Plays a role in the regulation of cell proliferation. May act as a tumor suppressor. In Ateles geoffroyi (Black-handed spider monkey), this protein is Testin (TES).